Here is a 585-residue protein sequence, read N- to C-terminus: Packaging protein UL32 (585 aa).

The segment at 1–25 (MDRVESEEPMDGFESPVFSENTSSN) is disordered. Residues Cys107, Cys110, His187, Cys193, Cys408, Cys411, His484, and Cys491 each contribute to the Zn(2+) site. Zinc finger stretches follow at residues 107-193 (CLVC…LHVC) and 408-491 (CMLC…DLLC).

This sequence belongs to the herpesviridae UL32 protein family.

Its subcellular location is the host cytoplasm. It localises to the host nucleus. Functionally, plays a role in efficient localization of neo-synthesized capsids to nuclear replication compartments, thereby controlling cleavage and packaging of virus genomic DNA. The polypeptide is Packaging protein UL32 (26) (Varicella-zoster virus (strain Dumas) (HHV-3)).